A 219-amino-acid chain; its full sequence is Putative NAD(P)H nitroreductase SSP0379 (219 aa).

The protein belongs to the nitroreductase family. FMN serves as cofactor.

This Staphylococcus saprophyticus subsp. saprophyticus (strain ATCC 15305 / DSM 20229 / NCIMB 8711 / NCTC 7292 / S-41) protein is Putative NAD(P)H nitroreductase SSP0379.